Reading from the N-terminus, the 168-residue chain is Putative defense protein 1 (168 aa).

Positions 1 to 18 (MMFAYIVAVVSALALTSA) are cleaved as a signal peptide. The 150-residue stretch at 19 to 168 (FPTGAPRSAC…SAPVKILSHH (150 aa)) folds into the Reelin domain. A disulfide bridge connects residues Cys-28 and Cys-105.

The protein belongs to the insect defense protein family. In terms of tissue distribution, very highly expressed in midgut, and highly expressed in fat body, silk gland and epidermis.

It localises to the secreted. As this protein is expressed upon bacterial infection, it may have antimicrobial activity. This is Putative defense protein 1 from Antheraea mylitta (Tasar silkworm).